The chain runs to 190 residues: Glutamyl-tRNA(Gln) amidotransferase subunit C, mitochondrial (190 aa).

Residues 1 to 96 constitute a mitochondrion transit peptide; it reads MISFQIILQQ…VLNLKQAVRF (96 aa). The interval 28–57 is disordered; sequence KSNSTAVGSSDEDDEIYVPKKPIPSPIDQS.

This sequence belongs to the GatC family. Subunit of the heterotrimeric GatCAB amidotransferase (AdT) complex, composed of A, B and C subunits.

The protein resides in the mitochondrion. The enzyme catalyses L-glutamyl-tRNA(Gln) + L-glutamine + ATP + H2O = L-glutaminyl-tRNA(Gln) + L-glutamate + ADP + phosphate + H(+). Allows the formation of correctly charged Gln-tRNA(Gln) through the transamidation of misacylated Glu-tRNA(Gln) in the mitochondria. The reaction takes place in the presence of glutamine and ATP through an activated gamma-phospho-Glu-tRNA(Gln). The chain is Glutamyl-tRNA(Gln) amidotransferase subunit C, mitochondrial from Loa loa (Eye worm).